A 105-amino-acid chain; its full sequence is uncharacterized protein (105 aa).

The Hcy-binding domain occupies Met-1 to Val-101.

This is an uncharacterized protein from Saccharomyces cerevisiae (strain ATCC 204508 / S288c) (Baker's yeast).